Consider the following 391-residue polypeptide: Elongation factor Tu (391 aa).

Residues 10 to 201 form the tr-type G domain; the sequence is KPHVNIGTVG…AVDEYIPTPE (192 aa). A G1 region spans residues 19-26; it reads GHVDHGKT. Position 19-26 (19-26) interacts with GTP; that stretch reads GHVDHGKT. A Mg(2+)-binding site is contributed by Thr-26. A G2 region spans residues 55–59; it reads GITIS. Residues 76-79 are G3; sequence DCPG. Residues 76–80 and 131–134 each bind GTP; these read DCPGH and NKVD. The G4 stretch occupies residues 131 to 134; the sequence is NKVD. Positions 169-171 are G5; that stretch reads SAL.

The protein belongs to the TRAFAC class translation factor GTPase superfamily. Classic translation factor GTPase family. EF-Tu/EF-1A subfamily. Monomer.

Its subcellular location is the cytoplasm. The enzyme catalyses GTP + H2O = GDP + phosphate + H(+). Functionally, GTP hydrolase that promotes the GTP-dependent binding of aminoacyl-tRNA to the A-site of ribosomes during protein biosynthesis. This Ruegeria sp. (strain TM1040) (Silicibacter sp.) protein is Elongation factor Tu.